Reading from the N-terminus, the 281-residue chain is Acetyl-coenzyme A carboxylase carboxyl transferase subunit beta (281 aa).

The disordered stretch occupies residues 1–23 (MAWFKREKKGISTSTEEKKEAPD). The 257-residue stretch at 25–281 (LWNKCPNCKK…LAAFLKMMKN (257 aa)) folds into the CoA carboxyltransferase N-terminal domain. 4 residues coordinate Zn(2+): cysteine 29, cysteine 32, cysteine 48, and cysteine 51. The C4-type zinc finger occupies 29 to 51 (CPNCKKALHSADLLENKYVCQYC).

This sequence belongs to the AccD/PCCB family. In terms of assembly, acetyl-CoA carboxylase is a heterohexamer composed of biotin carboxyl carrier protein (AccB), biotin carboxylase (AccC) and two subunits each of ACCase subunit alpha (AccA) and ACCase subunit beta (AccD). Zn(2+) is required as a cofactor.

Its subcellular location is the cytoplasm. The catalysed reaction is N(6)-carboxybiotinyl-L-lysyl-[protein] + acetyl-CoA = N(6)-biotinyl-L-lysyl-[protein] + malonyl-CoA. The protein operates within lipid metabolism; malonyl-CoA biosynthesis; malonyl-CoA from acetyl-CoA: step 1/1. Its function is as follows. Component of the acetyl coenzyme A carboxylase (ACC) complex. Biotin carboxylase (BC) catalyzes the carboxylation of biotin on its carrier protein (BCCP) and then the CO(2) group is transferred by the transcarboxylase to acetyl-CoA to form malonyl-CoA. This is Acetyl-coenzyme A carboxylase carboxyl transferase subunit beta from Pedobacter heparinus (strain ATCC 13125 / DSM 2366 / CIP 104194 / JCM 7457 / NBRC 12017 / NCIMB 9290 / NRRL B-14731 / HIM 762-3).